A 226-amino-acid polypeptide reads, in one-letter code: MPKGPVVIKVSGKYVNPEKPGLVKRYAQVLHELHSVGYRLVVVVGGGPEARRYIEAARELGLGKSFQDILGIEASRLNARLLIYALHPNAYPEPPRSIWELLEAYSTGLIVVAGGFQPGQSTSGVAALVAEAIGAELLVLATTVDGVYTADPAVDKSAQLIPRLSYEEFRRVVRQSMSPGRYELLDPVAISIVERSNIPVRVVNGSDPENVKRVVLGEELGSLITG.

9 to 13 provides a ligand contact to ATP; the sequence is KVSGK. Gly-46 provides a ligand contact to UMP. ATP is bound by residues Gly-47 and Arg-51. UMP contacts are provided by residues Asp-68 and 116 to 122; that span reads FQPGQST. The ATP site is built by Thr-142, Tyr-148, and Asp-151.

The protein belongs to the UMP kinase family. As to quaternary structure, homohexamer.

Its subcellular location is the cytoplasm. It carries out the reaction UMP + ATP = UDP + ADP. The protein operates within pyrimidine metabolism; CTP biosynthesis via de novo pathway; UDP from UMP (UMPK route): step 1/1. With respect to regulation, inhibited by UTP. In terms of biological role, catalyzes the reversible phosphorylation of UMP to UDP. This chain is Uridylate kinase, found in Hyperthermus butylicus (strain DSM 5456 / JCM 9403 / PLM1-5).